The following is a 258-amino-acid chain: Malonyl-[acyl-carrier protein] O-methyltransferase (258 aa).

The protein belongs to the methyltransferase superfamily.

The enzyme catalyses malonyl-[ACP] + S-adenosyl-L-methionine = malonyl-[ACP] methyl ester + S-adenosyl-L-homocysteine. The protein operates within cofactor biosynthesis; biotin biosynthesis. Functionally, converts the free carboxyl group of a malonyl-thioester to its methyl ester by transfer of a methyl group from S-adenosyl-L-methionine (SAM). It allows to synthesize pimeloyl-ACP via the fatty acid synthetic pathway. The sequence is that of Malonyl-[acyl-carrier protein] O-methyltransferase from Hamiltonella defensa subsp. Acyrthosiphon pisum (strain 5AT).